The following is a 389-amino-acid chain: NADH-dependent butanol dehydrogenase A (389 aa).

This sequence belongs to the iron-containing alcohol dehydrogenase family. Homodimer.

It participates in alcohol metabolism; butanol biosynthesis. This is NADH-dependent butanol dehydrogenase A (bdhA) from Clostridium acetobutylicum (strain ATCC 824 / DSM 792 / JCM 1419 / IAM 19013 / LMG 5710 / NBRC 13948 / NRRL B-527 / VKM B-1787 / 2291 / W).